Reading from the N-terminus, the 696-residue chain is C2 domain-containing protein 2 (696 aa).

A helical membrane pass occupies residues 13-33 (AQWLALVSLFVAALATVGLYL). The 192-residue stretch at 51-242 (EPGEGPRPGS…PTTVKEAQNL (192 aa)) folds into the SMP-LBD domain. Ser-60 bears the Phosphoserine mark. Positions 245–362 (AASTAQESCP…KKQPSGPQSF (118 aa)) constitute a C2 domain. A phosphoserine mark is found at Ser-435 and Ser-441. At Thr-445 the chain carries Phosphothreonine. A disordered region spans residues 539–580 (VDSTHQEDAPSHPERAAASAPPEEAESAQASLAPKPQEDELD). Over residues 542–553 (THQEDAPSHPER) the composition is skewed to basic and acidic residues. The span at 554 to 572 (AAASAPPEEAESAQASLAP) shows a compositional bias: low complexity. Ser-581 is subject to Phosphoserine.

It localises to the membrane. The polypeptide is C2 domain-containing protein 2 (C2CD2) (Homo sapiens (Human)).